Here is a 450-residue protein sequence, read N- to C-terminus: ATP-dependent RNA helicase FAL1 (450 aa).

The Q motif motif lies at 25–53 (PTFEDMHLKENLLRGIYAYGYESPSAVQS). A Helicase ATP-binding domain is found at 56–226 (IVQICKGRDT…TKFMTDPVRI (171 aa)). 69-76 (AQSGTGKT) lines the ATP pocket. The DEAD box motif lies at 174 to 177 (DEAD). A Helicase C-terminal domain is found at 237-398 (GLKQYFIAVE…EMPMNGTLFY (162 aa)).

The protein belongs to the DEAD box helicase family. DDX48/FAL1 subfamily.

It localises to the nucleus. The protein localises to the nucleolus. It carries out the reaction ATP + H2O = ADP + phosphate + H(+). In terms of biological role, ATP-dependent RNA helicase involved in 40S ribosomal subunit biogenesis. Required for the processing and cleavage of 35S pre-rRNA at sites A0, A1, and A2, leading to mature 18S rRNA. The chain is ATP-dependent RNA helicase FAL1 (FAL1) from Ajellomyces capsulatus (strain NAm1 / WU24) (Darling's disease fungus).